Consider the following 240-residue polypeptide: Uridylate kinase (240 aa).

13–16 (KASG) contacts ATP. Positions 21–26 (GAQGFG) are involved in allosteric activation by GTP. Gly55 contributes to the UMP binding site. Gly56 and Arg60 together coordinate ATP. UMP-binding positions include Asp75 and 136 to 143 (TGNPFFTT). Residues Thr163, Gln164, Tyr169, and Asp172 each contribute to the ATP site.

The protein belongs to the UMP kinase family. Homohexamer.

The protein resides in the cytoplasm. The catalysed reaction is UMP + ATP = UDP + ADP. It participates in pyrimidine metabolism; CTP biosynthesis via de novo pathway; UDP from UMP (UMPK route): step 1/1. Its activity is regulated as follows. Allosterically activated by GTP. Inhibited by UTP. Its function is as follows. Catalyzes the reversible phosphorylation of UMP to UDP. This chain is Uridylate kinase, found in Rhizobium etli (strain ATCC 51251 / DSM 11541 / JCM 21823 / NBRC 15573 / CFN 42).